We begin with the raw amino-acid sequence, 517 residues long: Serine hydroxymethyltransferase 1, mitochondrial (517 aa).

Residues 1–30 (MAMAMALRRLSSSIDKPIRPLIRSTSCYMS) constitute a mitochondrion transit peptide. The residue at position 286 (Lys286) is an N6-(pyridoxal phosphate)lysine.

Belongs to the SHMT family. In terms of assembly, homotetramer. Interacts with GLU1. Interacts with UBP16. Requires pyridoxal 5'-phosphate as cofactor. Post-translationally, ubiquitinated. As to expression, ubiquitous. Mostly expressed in leaves, less abundant in stems, flowers and siliques, and barely detectable in roots.

It localises to the mitochondrion. Its subcellular location is the cytoplasm. It catalyses the reaction (6R)-5,10-methylene-5,6,7,8-tetrahydrofolate + glycine + H2O = (6S)-5,6,7,8-tetrahydrofolate + L-serine. The protein operates within one-carbon metabolism; tetrahydrofolate interconversion. Functions in the photorespiratory pathway in catalyzing the interconversion of serine and glycine. Involved in controlling cell damage caused by abiotic stress, such as high light and salt and the hypersensitive defense response of plants. The protein is Serine hydroxymethyltransferase 1, mitochondrial of Arabidopsis thaliana (Mouse-ear cress).